The sequence spans 299 residues: Pyridoxal 5'-phosphate synthase subunit PdxS (299 aa).

Aspartate 24 lines the D-ribose 5-phosphate pocket. The Schiff-base intermediate with D-ribose 5-phosphate role is filled by lysine 81. Glycine 153 contacts D-ribose 5-phosphate. Arginine 165 contributes to the D-glyceraldehyde 3-phosphate binding site. Residues glycine 219 and 240–241 (GS) each bind D-ribose 5-phosphate.

Belongs to the PdxS/SNZ family. In the presence of PdxT, forms a dodecamer of heterodimers.

It catalyses the reaction aldehydo-D-ribose 5-phosphate + D-glyceraldehyde 3-phosphate + L-glutamine = pyridoxal 5'-phosphate + L-glutamate + phosphate + 3 H2O + H(+). It functions in the pathway cofactor biosynthesis; pyridoxal 5'-phosphate biosynthesis. Catalyzes the formation of pyridoxal 5'-phosphate from ribose 5-phosphate (RBP), glyceraldehyde 3-phosphate (G3P) and ammonia. The ammonia is provided by the PdxT subunit. Can also use ribulose 5-phosphate and dihydroxyacetone phosphate as substrates, resulting from enzyme-catalyzed isomerization of RBP and G3P, respectively. In Methanococcus maripaludis (strain DSM 14266 / JCM 13030 / NBRC 101832 / S2 / LL), this protein is Pyridoxal 5'-phosphate synthase subunit PdxS.